Here is a 145-residue protein sequence, read N- to C-terminus: Large ribosomal subunit protein uL24 (145 aa).

2 disordered regions span residues 1–21 (MKFN…HFNA) and 122–145 (KAKS…KMQE). K136 participates in a covalent cross-link: Glycyl lysine isopeptide (Lys-Gly) (interchain with G-Cter in SUMO2). Phosphothreonine is present on T139.

It belongs to the universal ribosomal protein uL24 family. Component of the large ribosomal subunit. Interacts with DHX33. In terms of processing, ufmylated by UFL1 in response to endoplasmic reticulum stress, promoting reticulophagy of endoplasmic reticulum sheets.

It is found in the cytoplasm. Component of the large ribosomal subunit. The ribosome is a large ribonucleoprotein complex responsible for the synthesis of proteins in the cell. The polypeptide is Large ribosomal subunit protein uL24 (RPL26) (Bos taurus (Bovine)).